Reading from the N-terminus, the 179-residue chain is ATP synthase subunit delta (179 aa).

It belongs to the ATPase delta chain family. In terms of assembly, F-type ATPases have 2 components, F(1) - the catalytic core - and F(0) - the membrane proton channel. F(1) has five subunits: alpha(3), beta(3), gamma(1), delta(1), epsilon(1). F(0) has three main subunits: a(1), b(2) and c(10-14). The alpha and beta chains form an alternating ring which encloses part of the gamma chain. F(1) is attached to F(0) by a central stalk formed by the gamma and epsilon chains, while a peripheral stalk is formed by the delta and b chains.

Its subcellular location is the cell inner membrane. Functionally, f(1)F(0) ATP synthase produces ATP from ADP in the presence of a proton or sodium gradient. F-type ATPases consist of two structural domains, F(1) containing the extramembraneous catalytic core and F(0) containing the membrane proton channel, linked together by a central stalk and a peripheral stalk. During catalysis, ATP synthesis in the catalytic domain of F(1) is coupled via a rotary mechanism of the central stalk subunits to proton translocation. Its function is as follows. This protein is part of the stalk that links CF(0) to CF(1). It either transmits conformational changes from CF(0) to CF(1) or is implicated in proton conduction. In Paraburkholderia phytofirmans (strain DSM 17436 / LMG 22146 / PsJN) (Burkholderia phytofirmans), this protein is ATP synthase subunit delta.